A 911-amino-acid polypeptide reads, in one-letter code: Protein translocase subunit SecA (911 aa).

Residues glutamine 86, 104-108 (GEGKT), and aspartate 512 contribute to the ATP site. Residues cysteine 895, cysteine 897, cysteine 906, and histidine 907 each contribute to the Zn(2+) site.

This sequence belongs to the SecA family. As to quaternary structure, monomer and homodimer. Part of the essential Sec protein translocation apparatus which comprises SecA, SecYEG and auxiliary proteins SecDF-YajC and YidC. Zn(2+) is required as a cofactor.

It localises to the cell inner membrane. The protein localises to the cytoplasm. It carries out the reaction ATP + H2O + cellular proteinSide 1 = ADP + phosphate + cellular proteinSide 2.. In terms of biological role, part of the Sec protein translocase complex. Interacts with the SecYEG preprotein conducting channel. Has a central role in coupling the hydrolysis of ATP to the transfer of proteins into and across the cell membrane, serving both as a receptor for the preprotein-SecB complex and as an ATP-driven molecular motor driving the stepwise translocation of polypeptide chains across the membrane. The sequence is that of Protein translocase subunit SecA from Bordetella bronchiseptica (strain ATCC BAA-588 / NCTC 13252 / RB50) (Alcaligenes bronchisepticus).